A 168-amino-acid chain; its full sequence is Photosystem I assembly protein Ycf3 (168 aa).

TPR repeat units lie at residues 35-68 (AFTYYRDGMSAQSEGNYAEALQNYYEATRPEIDP), 72-105 (SYILYNIGLIHTSNGEHTKALEYYFRALERNPFL), and 120-153 (GEQAIRQGDSEIAETWSDQAAEYWKQAIALTPGN).

Belongs to the Ycf3 family.

It is found in the plastid. It localises to the chloroplast thylakoid membrane. In terms of biological role, essential for the assembly of the photosystem I (PSI) complex. May act as a chaperone-like factor to guide the assembly of the PSI subunits. The polypeptide is Photosystem I assembly protein Ycf3 (Amborella trichopoda).